Here is a 102-residue protein sequence, read N- to C-terminus: Small ribosomal subunit protein uS10 (102 aa).

The protein belongs to the universal ribosomal protein uS10 family. As to quaternary structure, part of the 30S ribosomal subunit.

Involved in the binding of tRNA to the ribosomes. This chain is Small ribosomal subunit protein uS10, found in Saccharolobus islandicus (strain M.16.4 / Kamchatka #3) (Sulfolobus islandicus).